The chain runs to 160 residues: Putative pre-16S rRNA nuclease (160 aa).

This sequence belongs to the YqgF nuclease family.

Its subcellular location is the cytoplasm. Could be a nuclease involved in processing of the 5'-end of pre-16S rRNA. The sequence is that of Putative pre-16S rRNA nuclease from Chelativorans sp. (strain BNC1).